Consider the following 168-residue polypeptide: Ribosome maturation factor RimM (168 aa).

Residues 92–166 (EDTFYKADLI…RITVDPIEGM (75 aa)) enclose the PRC barrel domain.

Belongs to the RimM family. As to quaternary structure, binds ribosomal protein uS19.

It localises to the cytoplasm. Functionally, an accessory protein needed during the final step in the assembly of 30S ribosomal subunit, possibly for assembly of the head region. Essential for efficient processing of 16S rRNA. May be needed both before and after RbfA during the maturation of 16S rRNA. It has affinity for free ribosomal 30S subunits but not for 70S ribosomes. This Alkaliphilus metalliredigens (strain QYMF) protein is Ribosome maturation factor RimM.